The chain runs to 133 residues: Membrane protein FAM174B (133 aa).

Positions 1-19 (MWLYTFAVALIVIAQEING) are cleaved as a signal peptide. Residues 20–67 (EPHTRPSSATPLNATLPPQEEGSAQNTTDAAVGSRLSTILRDLPTIKN) lie on the Extracellular side of the membrane. The tract at residues 22 to 47 (HTRPSSATPLNATLPPQEEGSAQNTT) is disordered. 3 N-linked (GlcNAc...) asparagine glycosylation sites follow: asparagine 32, asparagine 45, and asparagine 67. The chain crosses the membrane as a helical span at residues 68–88 (ISIFICVLTTLLITCLVIKIC). Residues 89 to 133 (RSARKIRKTRKYDIITTPAERVEMAPLNEENDEEDDSTLFDVKYR) lie on the Cytoplasmic side of the membrane. A disordered region spans residues 113–133 (APLNEENDEEDDSTLFDVKYR). Positions 117–126 (EENDEEDDST) are enriched in acidic residues.

The protein belongs to the FAM174 family.

The protein resides in the cell membrane. Its subcellular location is the golgi apparatus. Essential for Golgi structural integrity. This Danio rerio (Zebrafish) protein is Membrane protein FAM174B (Fam174b).